The sequence spans 341 residues: Tetraacyldisaccharide 4'-kinase (341 aa).

Residue 54–61 (TVGGAGKT) participates in ATP binding.

Belongs to the LpxK family.

It carries out the reaction a lipid A disaccharide + ATP = a lipid IVA + ADP + H(+). Its pathway is glycolipid biosynthesis; lipid IV(A) biosynthesis; lipid IV(A) from (3R)-3-hydroxytetradecanoyl-[acyl-carrier-protein] and UDP-N-acetyl-alpha-D-glucosamine: step 6/6. Transfers the gamma-phosphate of ATP to the 4'-position of a tetraacyldisaccharide 1-phosphate intermediate (termed DS-1-P) to form tetraacyldisaccharide 1,4'-bis-phosphate (lipid IVA). This Brucella melitensis biotype 2 (strain ATCC 23457) protein is Tetraacyldisaccharide 4'-kinase.